Consider the following 410-residue polypeptide: Multifunctional CCA protein (410 aa).

ATP contacts are provided by Gly8 and Arg11. Positions 8 and 11 each coordinate CTP. 2 residues coordinate Mg(2+): Asp21 and Asp23. Residues Arg91, Arg138, and Arg141 each coordinate ATP. 3 residues coordinate CTP: Arg91, Arg138, and Arg141. An HD domain is found at 229-347 (TGIHQEMVSD…AQLALVCEAD (119 aa)).

Belongs to the tRNA nucleotidyltransferase/poly(A) polymerase family. Bacterial CCA-adding enzyme type 1 subfamily. In terms of assembly, monomer. Can also form homodimers and oligomers. It depends on Mg(2+) as a cofactor. Ni(2+) serves as cofactor.

The catalysed reaction is a tRNA precursor + 2 CTP + ATP = a tRNA with a 3' CCA end + 3 diphosphate. It catalyses the reaction a tRNA with a 3' CCA end + 2 CTP + ATP = a tRNA with a 3' CCACCA end + 3 diphosphate. Catalyzes the addition and repair of the essential 3'-terminal CCA sequence in tRNAs without using a nucleic acid template. Adds these three nucleotides in the order of C, C, and A to the tRNA nucleotide-73, using CTP and ATP as substrates and producing inorganic pyrophosphate. tRNA 3'-terminal CCA addition is required both for tRNA processing and repair. Also involved in tRNA surveillance by mediating tandem CCA addition to generate a CCACCA at the 3' terminus of unstable tRNAs. While stable tRNAs receive only 3'-terminal CCA, unstable tRNAs are marked with CCACCA and rapidly degraded. In Xanthomonas axonopodis pv. citri (strain 306), this protein is Multifunctional CCA protein.